A 311-amino-acid polypeptide reads, in one-letter code: Glutaminase (311 aa).

Residues Ser69, Asn120, Glu164, Asn171, Tyr195, Tyr247, and Val265 each coordinate substrate.

Belongs to the glutaminase family. As to quaternary structure, homotetramer.

The enzyme catalyses L-glutamine + H2O = L-glutamate + NH4(+). This Colwellia psychrerythraea (strain 34H / ATCC BAA-681) (Vibrio psychroerythus) protein is Glutaminase.